Consider the following 356-residue polypeptide: Alanine racemase (356 aa).

Lysine 34 (proton acceptor; specific for D-alanine) is an active-site residue. Lysine 34 is modified (N6-(pyridoxal phosphate)lysine). Substrate is bound at residue arginine 129. The Proton acceptor; specific for L-alanine role is filled by tyrosine 253. Methionine 301 lines the substrate pocket.

It belongs to the alanine racemase family. Requires pyridoxal 5'-phosphate as cofactor.

The enzyme catalyses L-alanine = D-alanine. Its pathway is amino-acid biosynthesis; D-alanine biosynthesis; D-alanine from L-alanine: step 1/1. In terms of biological role, catalyzes the interconversion of L-alanine and D-alanine. May also act on other amino acids. The polypeptide is Alanine racemase (alr) (Nitrosococcus oceani (strain ATCC 19707 / BCRC 17464 / JCM 30415 / NCIMB 11848 / C-107)).